Here is a 139-residue protein sequence, read N- to C-terminus: Nucleoside diphosphate kinase (139 aa).

Lysine 11, phenylalanine 59, arginine 87, threonine 93, arginine 104, and asparagine 114 together coordinate ATP. Residue histidine 117 is the Pros-phosphohistidine intermediate of the active site.

This sequence belongs to the NDK family. In terms of assembly, homotetramer. Requires Mg(2+) as cofactor.

The protein resides in the cytoplasm. The enzyme catalyses a 2'-deoxyribonucleoside 5'-diphosphate + ATP = a 2'-deoxyribonucleoside 5'-triphosphate + ADP. It catalyses the reaction a ribonucleoside 5'-diphosphate + ATP = a ribonucleoside 5'-triphosphate + ADP. Major role in the synthesis of nucleoside triphosphates other than ATP. The ATP gamma phosphate is transferred to the NDP beta phosphate via a ping-pong mechanism, using a phosphorylated active-site intermediate. In Wolbachia sp. subsp. Drosophila simulans (strain wRi), this protein is Nucleoside diphosphate kinase.